The sequence spans 262 residues: Nurim (262 aa).

Topologically, residues 1–4 (MAPA) are nuclear. Residues 5 to 28 (LLLVPAALASFILAFGTGVEFVRF) form a helical membrane-spanning segment. Residues 29–58 (TSLRPLLGGIPESGGPDARQGWLAALQDRS) are Perinuclear space-facing. A helical membrane pass occupies residues 59 to 80 (ILAPLAWDLGLLLLFVGQHSLM). The Nuclear portion of the chain corresponds to 81-97 (AAERVKAWTSRYFGVLQ). A helical transmembrane segment spans residues 98 to 114 (RSLYVACTALALQLVMR). Topologically, residues 115 to 133 (YWEPIPKGPVLWEARAEPW) are perinuclear space. The helical transmembrane segment at 134–164 (ATWVPLLCFVLHVISWLLIFSILLVFDYAEL) threads the bilayer. The Nuclear segment spans residues 165–191 (MGLKQVYYHVLGLGEPLALKSPRALRL). The helical transmembrane segment at 192-210 (FSHLRHPVCVELLTVLWVV) threads the bilayer. Over 211-216 (PTLGTD) the chain is Perinuclear space. The helical transmembrane segment at 217-234 (RLLLAFLLTLYLGLAHGL) threads the bilayer. The Nuclear portion of the chain corresponds to 235 to 262 (DQQDLRYLRAQLQRKLHLLSRPQDGEAE).

This sequence belongs to the nurim family.

It localises to the nucleus inner membrane. This chain is Nurim (NRM), found in Pan troglodytes (Chimpanzee).